Consider the following 286-residue polypeptide: 5'-3' exonuclease (286 aa).

The 5'-3' exonuclease domain occupies 172–270; that stretch reads IKPKEFIDFL…IKLKDIILKK (99 aa).

Its function is as follows. 5'-3' exonuclease acting preferentially on double-stranded DNA. The chain is 5'-3' exonuclease from Buchnera aphidicola subsp. Acyrthosiphon pisum (strain APS) (Acyrthosiphon pisum symbiotic bacterium).